The chain runs to 897 residues: Chromodomain-helicase-DNA-binding protein 1-like (897 aa).

Omega-N-methylarginine is present on Arg-9. The Helicase ATP-binding domain maps to 58–223 (AQRFHCQNGC…YSLLSFVEPD (166 aa)). 71–78 (DEMGLGKT) is a binding site for ATP. The DEAH box signature appears at 174–177 (DEAH). Residues 351–513 (LLDKLLAFLY…QKPAADADLQ (163 aa)) enclose the Helicase C-terminal domain. Phosphoserine is present on residues Ser-540, Ser-607, Ser-618, Ser-628, and Ser-636. Positions 601–635 (TLLEKASQEGRSLRNKGSVLIPGLVEGSTKRKRVL) are regulatory linker segment (RLS). The required for ATPase activity stretch occupies residues 615 to 673 (NKGSVLIPGLVEGSTKRKRVLSPEELEDRQKKRQEAAAKRRRLIEEKKRQKEEAEHKKK). 2 disordered regions span residues 628 to 654 (STKR…AAKR) and 687 to 711 (LPSE…DYQD). Residues 638 to 675 (EELEDRQKKRQEAAAKRRRLIEEKKRQKEEAEHKKKMA) adopt a coiled-coil conformation. Basic and acidic residues predominate over residues 642 to 654 (DRQKKRQEAAAKR). Residues 690–711 (EESEPEDLENGEESSAELDYQD) are compositionally biased toward acidic residues. One can recognise a Macro domain in the interval 704-897 (SAELDYQDPD…SSSSSRQLVP (194 aa)). Position 891 is a phosphoserine (Ser-891).

This sequence belongs to the SNF2/RAD54 helicase family. In terms of assembly, interacts with nucleosomes; interacts with the acidic patch of histones. Interacts (via macro domain) with PARP1; interacts only when PARP1 is poly-ADP-ribosylated (PARylated). Interacts with CIAO1. Frequently overexpressed in hepatomacellular carcinomas.

Its subcellular location is the nucleus. The protein localises to the chromosome. It carries out the reaction ATP + H2O = ADP + phosphate + H(+). Adopts an inactive conformation in absence of DNA damage. Binding to poly-ADP-ribosylated histones activates the ATP-dependent chromatin remodeler activity. Functionally, ATP-dependent chromatin remodeler that mediates chromatin-remodeling following DNA damage. Recruited to DNA damage sites through interaction with poly-ADP-ribose: specifically recognizes and binds histones that are poly-ADP-ribosylated on serine residues in response to DNA damage. Poly-ADP-ribose-binding activates the ATP-dependent chromatin remodeler activity, thereby regulating chromatin during DNA repair. Catalyzes nucleosome sliding away from DNA breaks in an ATP-dependent manner. Chromatin remodeling activity promotes PARP2 removal from chromatin. This Homo sapiens (Human) protein is Chromodomain-helicase-DNA-binding protein 1-like.